Here is a 434-residue protein sequence, read N- to C-terminus: Adenylosuccinate synthetase (434 aa).

GTP-binding positions include 22 to 28 and 50 to 52; these read GDEGKGK and GHT. Asp-23 functions as the Proton acceptor in the catalytic mechanism. Positions 23 and 50 each coordinate Mg(2+). IMP-binding positions include 23-26, 48-51, Thr-139, Arg-153, Gln-234, Thr-249, and Arg-313; these read DEGK and NAGH. Catalysis depends on His-51, which acts as the Proton donor. 309–315 is a binding site for substrate; sequence ATTGRKR. GTP contacts are provided by residues Arg-315, 341-343, and 423-425; these read KLD and SVG.

It belongs to the adenylosuccinate synthetase family. As to quaternary structure, homodimer. It depends on Mg(2+) as a cofactor.

It is found in the cytoplasm. The enzyme catalyses IMP + L-aspartate + GTP = N(6)-(1,2-dicarboxyethyl)-AMP + GDP + phosphate + 2 H(+). It functions in the pathway purine metabolism; AMP biosynthesis via de novo pathway; AMP from IMP: step 1/2. Its function is as follows. Plays an important role in the de novo pathway of purine nucleotide biosynthesis. Catalyzes the first committed step in the biosynthesis of AMP from IMP. This chain is Adenylosuccinate synthetase, found in Chlorobium phaeobacteroides (strain DSM 266 / SMG 266 / 2430).